The sequence spans 182 residues: Protein Syd (182 aa).

This sequence belongs to the Syd family.

Its subcellular location is the cell inner membrane. Functionally, interacts with the SecY protein in vivo. May bind preferentially to an uncomplexed state of SecY, thus functioning either as a chelating agent for excess SecY in the cell or as a regulatory factor that negatively controls the translocase function. This chain is Protein Syd, found in Aeromonas hydrophila subsp. hydrophila (strain ATCC 7966 / DSM 30187 / BCRC 13018 / CCUG 14551 / JCM 1027 / KCTC 2358 / NCIMB 9240 / NCTC 8049).